A 289-amino-acid chain; its full sequence is 3-methyl-2-oxobutanoate hydroxymethyltransferase (289 aa).

Mg(2+)-binding residues include Asp50 and Asp89. 3-methyl-2-oxobutanoate contacts are provided by residues 50–51 (DS), Asp89, and Lys119. Glu121 lines the Mg(2+) pocket. Glu188 acts as the Proton acceptor in catalysis. The disordered stretch occupies residues 266 to 289 (AQHSFGMPEDEQRRWEENVSGADD).

It belongs to the PanB family. As to quaternary structure, homodecamer; pentamer of dimers. Mg(2+) is required as a cofactor.

The protein resides in the cytoplasm. The catalysed reaction is 3-methyl-2-oxobutanoate + (6R)-5,10-methylene-5,6,7,8-tetrahydrofolate + H2O = 2-dehydropantoate + (6S)-5,6,7,8-tetrahydrofolate. It participates in cofactor biosynthesis; (R)-pantothenate biosynthesis; (R)-pantoate from 3-methyl-2-oxobutanoate: step 1/2. Catalyzes the reversible reaction in which hydroxymethyl group from 5,10-methylenetetrahydrofolate is transferred onto alpha-ketoisovalerate to form ketopantoate. The chain is 3-methyl-2-oxobutanoate hydroxymethyltransferase from Oleidesulfovibrio alaskensis (strain ATCC BAA-1058 / DSM 17464 / G20) (Desulfovibrio alaskensis).